The primary structure comprises 346 residues: UDP-3-O-acylglucosamine N-acyltransferase (346 aa).

Histidine 253 functions as the Proton acceptor in the catalytic mechanism.

This sequence belongs to the transferase hexapeptide repeat family. LpxD subfamily. Homotrimer.

It catalyses the reaction a UDP-3-O-[(3R)-3-hydroxyacyl]-alpha-D-glucosamine + a (3R)-hydroxyacyl-[ACP] = a UDP-2-N,3-O-bis[(3R)-3-hydroxyacyl]-alpha-D-glucosamine + holo-[ACP] + H(+). The protein operates within bacterial outer membrane biogenesis; LPS lipid A biosynthesis. Catalyzes the N-acylation of UDP-3-O-acylglucosamine using 3-hydroxyacyl-ACP as the acyl donor. Is involved in the biosynthesis of lipid A, a phosphorylated glycolipid that anchors the lipopolysaccharide to the outer membrane of the cell. The chain is UDP-3-O-acylglucosamine N-acyltransferase from Rickettsia prowazekii (strain Madrid E).